We begin with the raw amino-acid sequence, 246 residues long: UL16-binding protein 6 (246 aa).

The signal sequence occupies residues methionine 1–alanine 25. The tract at residues aspartate 29–glutamate 117 is MHC class I alpha-1 like. Cysteine 50 and cysteine 66 are disulfide-bonded. Asparagine 68 and asparagine 82 each carry an N-linked (GlcNAc...) asparagine glycan. Residues proline 118 to glycine 210 form an MHC class I alpha-2 like region. Cysteine 127 and cysteine 190 are oxidised to a cystine. The GPI-anchor amidated glycine moiety is linked to residue glycine 218. Residues threonine 219–isoleucine 246 constitute a propeptide, removed in mature form.

The protein belongs to the MHC class I family. In terms of assembly, interacts with KLRK1/NKG2D. As to quaternary structure, (Microbial infection) In CMV-infected cells, interacts with the viral glycoprotein UL16; this interaction causes relocalization from the cell surface to the cytoplasm and prevents binding to and activation of KLRK1/NKG2D, providing CMV with an immune evasion mechanism. In terms of tissue distribution, widely expressed. Expressed in trachea. Constitutively expressed in peripheral blood mononuclear cells, including B-cells and natural killer cells, as well as CD4+ and CD8+ T-cells and monocytes. Tends to be up-regulated in various lymphoid malignancies, including chronic lymphocytic leukemia.

It localises to the cell membrane. Its subcellular location is the endoplasmic reticulum. Functionally, binds and activates the KLRK1/NKG2D receptor, mediating natural killer cell cytotoxicity. The chain is UL16-binding protein 6 (RAET1L) from Homo sapiens (Human).